The sequence spans 182 residues: Late embryogenesis abundant protein 3 (182 aa).

The interval 1–51 (MAQHQHSPQRPRDQDNTRPHDQYGIVFSVSGDDVARKQGDSFSQPDPTVAT) is disordered. A Nuclear localization signal (NLS) motif is present at residues 7 to 11 (SPQRP). Positions 10-21 (RPRDQDNTRPHD) are enriched in basic and acidic residues. SMP domains are found at residues 58 to 115 (VTIG…TNEQ) and 123 to 181 (VNIA…LNQQ). The tract at residues 145–182 (EDAEAVVGAELRSSSEMKTTPGGVADSMSAGARLNQQL) is disordered.

The protein belongs to the LEA type SMP family.

It localises to the cytoplasm. The protein localises to the nucleus. Functionally, LEA proteins are late embryonic proteins abundant in higher plant seed embryos. The function of those proteins is not known. The polypeptide is Late embryogenesis abundant protein 3 (Arabidopsis thaliana (Mouse-ear cress)).